We begin with the raw amino-acid sequence, 234 residues long: NLP effector protein 1 (234 aa).

An N-terminal signal peptide occupies residues 1–18; that stretch reads MQLRAFISVFASLACVNA. Asn66 is a glycosylation site (N-linked (GlcNAc...) asparagine). Residues 102–112 carry the Conserved undecapeptide motif I motif; it reads AFMYSWYMPKD. A Hepta-peptide GHRHDWE motif II motif is present at residues 119–125; sequence GHRHDWE.

This sequence belongs to the Necrosis inducing protein (NPP1) family.

The protein localises to the secreted. Functionally, secreted effector that contributes to virulence during infection by P.capsici. Induces distinct chlorosis at 3 days after inoculation of host C.annuum leaves, and all the chlorotic areas gradually turn brown and become moderately necrotic at 7 days after inoculation. Leads only to chlorotic areas, without necrosis at 7 days after non-host N.benthamiana leaves infection. Induces cell death in hot pepper. The protein is NLP effector protein 1 of Phytophthora capsici.